Here is a 555-residue protein sequence, read N- to C-terminus: DNA ligase (555 aa).

An ATP-binding site is contributed by Glu-247. Lys-249 functions as the N6-AMP-lysine intermediate in the catalytic mechanism. 6 residues coordinate ATP: Arg-254, Arg-269, Glu-298, Phe-337, Arg-411, and Lys-417.

Belongs to the ATP-dependent DNA ligase family. Mg(2+) is required as a cofactor.

It catalyses the reaction ATP + (deoxyribonucleotide)n-3'-hydroxyl + 5'-phospho-(deoxyribonucleotide)m = (deoxyribonucleotide)n+m + AMP + diphosphate.. Its function is as follows. DNA ligase that seals nicks in double-stranded DNA during DNA replication, DNA recombination and DNA repair. This chain is DNA ligase, found in Archaeoglobus fulgidus (strain ATCC 49558 / DSM 4304 / JCM 9628 / NBRC 100126 / VC-16).